Here is a 277-residue protein sequence, read N- to C-terminus: Digeranylgeranylglyceryl phosphate synthase (277 aa).

8 consecutive transmembrane segments (helical) span residues 16–36, 40–60, 93–113, 129–149, 153–173, 199–218, 222–244, and 253–273; these read ILAGIVGILGSLVAYEGIPPV, ILIFLVVYFGCSAGNTINDYF, FIGLIIALLLGWSAFLFALGA, FIGNVTVALLTAATPIYGAVG, IDLAGYLAICAFLVNVSREIM, SGIIASIFGFLTIISSFLPV, IGLGYLPIIIVDIMIAKASIDVL, and GQKILKFATFIAVISFLLGAL.

This sequence belongs to the UbiA prenyltransferase family. DGGGP synthase subfamily. The cofactor is Mg(2+).

It is found in the cell membrane. The enzyme catalyses sn-3-O-(geranylgeranyl)glycerol 1-phosphate + (2E,6E,10E)-geranylgeranyl diphosphate = 2,3-bis-O-(geranylgeranyl)-sn-glycerol 1-phosphate + diphosphate. It participates in membrane lipid metabolism; glycerophospholipid metabolism. Its function is as follows. Prenyltransferase that catalyzes the transfer of the geranylgeranyl moiety of geranylgeranyl diphosphate (GGPP) to the C2 hydroxyl of (S)-3-O-geranylgeranylglyceryl phosphate (GGGP). This reaction is the second ether-bond-formation step in the biosynthesis of archaeal membrane lipids. This Pyrococcus horikoshii (strain ATCC 700860 / DSM 12428 / JCM 9974 / NBRC 100139 / OT-3) protein is Digeranylgeranylglyceryl phosphate synthase.